Consider the following 396-residue polypeptide: Interleukin-3 receptor subunit alpha (396 aa).

Residues 1 to 16 (MAANLWLILGLLASHS) form the signal peptide. Residues 17–331 (SDLAAVREAP…VCPPEVMPVK (315 aa)) lie on the Extracellular side of the membrane. Cystine bridges form between Cys-62–Cys-79, Cys-87–Cys-223, Cys-125–Cys-134, Cys-165–Cys-187, and Cys-245–Cys-323. Asn-91 carries an N-linked (GlcNAc...) asparagine glycan. N-linked (GlcNAc...) asparagine glycans are attached at residues Asn-213, Asn-246, Asn-272, and Asn-283. The WSXWS motif motif lies at 312–316 (LSSWS). Residues 332 to 355 (TALVTSVATVLGAGLVAAGLLLWW) traverse the membrane as a helical segment. The Cytoplasmic portion of the chain corresponds to 356-396 (RKSLLYRLCPPIPRLRLPLAGEMVVWEPALEDCEVTPVTDA). Residue Lys-357 forms a Glycyl lysine isopeptide (Lys-Gly) (interchain with G-Cter in ubiquitin) linkage. The Box 1 motif signature appears at 363-371 (LCPPIPRLR).

The protein belongs to the type I cytokine receptor family. Type 5 subfamily. In terms of assembly, interacts with IL3. Heterodimer of an alpha and a beta subunit. The beta subunit is common to the IL3, IL5 and GM-CSF receptors. In terms of processing, ubiquitinated at Lys-357 by RNFT2 in response to IL3. Ubiquitination leads ligand-induced degradation by the proteasome. Ubiquitinated by RNF128 via 'Lys-27'-linked polyubiquitination, facilitating its degradation through the lysosomal pathway.

It localises to the cell membrane. Its subcellular location is the endomembrane system. Cell surface receptor for IL3 expressed on hematopoietic progenitor cells, monocytes and B-lymphocytes that controls the production and differentiation of hematopoietic progenitor cells into lineage-restricted cells. Ligand stimulation rapidly induces hetrodimerization with IL3RB, phosphorylation and enzyme activity of effector proteins such as JAK2 and PI3K that play a role in signaling cell proliferation and differentiation. Activation of JAK2 leads to STAT5-mediated transcriptional program. The sequence is that of Interleukin-3 receptor subunit alpha (Il3ra) from Mus musculus (Mouse).